Consider the following 389-residue polypeptide: Lipid-A-disaccharide synthase (389 aa).

Belongs to the LpxB family.

The catalysed reaction is a lipid X + a UDP-2-N,3-O-bis[(3R)-3-hydroxyacyl]-alpha-D-glucosamine = a lipid A disaccharide + UDP + H(+). Its pathway is bacterial outer membrane biogenesis; LPS lipid A biosynthesis. Functionally, condensation of UDP-2,3-diacylglucosamine and 2,3-diacylglucosamine-1-phosphate to form lipid A disaccharide, a precursor of lipid A, a phosphorylated glycolipid that anchors the lipopolysaccharide to the outer membrane of the cell. The protein is Lipid-A-disaccharide synthase of Burkholderia ambifaria (strain MC40-6).